The chain runs to 211 residues: Thymidylate kinase (211 aa).

11-18 (GPDGAGKT) contributes to the ATP binding site.

It belongs to the thymidylate kinase family.

It catalyses the reaction dTMP + ATP = dTDP + ADP. Functionally, phosphorylation of dTMP to form dTDP in both de novo and salvage pathways of dTTP synthesis. The protein is Thymidylate kinase of Streptococcus pyogenes serotype M49 (strain NZ131).